The sequence spans 259 residues: 14-3-3-like protein (259 aa).

Residues 237 to 259 (DTTDDAEDEIREGSKQESGDGQQ) are disordered. The segment covering 247 to 259 (REGSKQESGDGQQ) has biased composition (basic and acidic residues).

Belongs to the 14-3-3 family. In terms of tissue distribution, leaves specific.

This chain is 14-3-3-like protein, found in Solanum tuberosum (Potato).